The following is a 184-amino-acid chain: Ethylene-responsive transcription factor ERF010 (184 aa).

The AP2/ERF DNA-binding region spans 20–77; it reads PYKGIRMRKWGKWVAEIREPNKRSRLWLGSYSTPEAAARAYDTAVFYLRGPTARLNFP. The interval 123–184 is disordered; sequence QNRDSDVDNK…SSDEEWESKH (62 aa). Residues 161 to 172 show a composition bias toward basic and acidic residues; that stretch reads LLDRVDLNKLPD. A compositionally biased stretch (acidic residues) spans 174-184; that stretch reads ESSDEEWESKH.

This sequence belongs to the AP2/ERF transcription factor family. ERF subfamily.

The protein resides in the nucleus. In terms of biological role, probably acts as a transcriptional activator. Binds to the GCC-box pathogenesis-related promoter element. May be involved in the regulation of gene expression by stress factors and by components of stress signal transduction pathways. This Arabidopsis thaliana (Mouse-ear cress) protein is Ethylene-responsive transcription factor ERF010 (ERF010).